Reading from the N-terminus, the 24-residue chain is FWGALAKGALKLIPSLFSSFSKKD.

Homooligomer. As to expression, expressed by the venom gland.

Its subcellular location is the secreted. The protein localises to the target cell membrane. Disrupts cell membranes through formation of pores. Has strong antimicrobial activity against Gram-positive bacteria B.subtilis, S.epidermidis, E.faecalis and S.aureus. Is less active against Gram-negative bacteria P.aeruginosa and E.coli. Also increases efficacy of antibiotics (ampicillin, chloramphenicol, streptomycin, kanamycin, novobiocin) when tested against E.coli, probably by facilitating their incorporation into the bacteria. Possesses antifungal activity against C.albicans and hemolytic activity against human, sheep and pig erythrocytes. In Pandinus imperator (Emperor scorpion), this protein is Pandinin-2.